A 201-amino-acid chain; its full sequence is Cobalt-precorrin-7 C(5)-methyltransferase (201 aa).

Belongs to the precorrin methyltransferase family.

It carries out the reaction Co-precorrin-7 + S-adenosyl-L-methionine = Co-precorrin-8X + S-adenosyl-L-homocysteine + H(+). It participates in cofactor biosynthesis; adenosylcobalamin biosynthesis; cob(II)yrinate a,c-diamide from sirohydrochlorin (anaerobic route): step 8/10. Catalyzes the methylation of C-5 in cobalt-precorrin-7 to form cobalt-precorrin-8. In Salmonella typhi, this protein is Cobalt-precorrin-7 C(5)-methyltransferase (cbiE).